Here is a 192-residue protein sequence, read N- to C-terminus: UPF0301 protein Bcep18194_A3962 (192 aa).

Belongs to the UPF0301 (AlgH) family.

This Burkholderia lata (strain ATCC 17760 / DSM 23089 / LMG 22485 / NCIMB 9086 / R18194 / 383) protein is UPF0301 protein Bcep18194_A3962.